The primary structure comprises 423 residues: UPF0229 protein Psyr_4632 (423 aa).

Residues 65–110 (HHGRGGKQTVVHPGNKEFTTGEHIARPQGGGGGKGPGKAGNSGEGM) form a disordered region. Positions 92 to 107 (QGGGGGKGPGKAGNSG) are enriched in gly residues.

Belongs to the UPF0229 family.

The chain is UPF0229 protein Psyr_4632 from Pseudomonas syringae pv. syringae (strain B728a).